Consider the following 256-residue polypeptide: Pimeloyl-[acyl-carrier protein] methyl ester esterase (256 aa).

Residues 15-242 (HLVLLHGWGL…AAHAPFISHP (228 aa)) enclose the AB hydrolase-1 domain. Substrate is bound by residues Trp22, 82 to 83 (SL), and 143 to 147 (FLALQ). Residue Ser82 is the Nucleophile of the active site. Catalysis depends on residues Asp207 and His235. Residue His235 participates in substrate binding.

The protein belongs to the AB hydrolase superfamily. Carboxylesterase BioH family. Monomer.

The protein resides in the cytoplasm. It carries out the reaction 6-carboxyhexanoyl-[ACP] methyl ester + H2O = 6-carboxyhexanoyl-[ACP] + methanol + H(+). It functions in the pathway cofactor biosynthesis; biotin biosynthesis. Functionally, the physiological role of BioH is to remove the methyl group introduced by BioC when the pimeloyl moiety is complete. It allows to synthesize pimeloyl-ACP via the fatty acid synthetic pathway through the hydrolysis of the ester bonds of pimeloyl-ACP esters. The protein is Pimeloyl-[acyl-carrier protein] methyl ester esterase of Escherichia coli (strain SMS-3-5 / SECEC).